A 651-amino-acid chain; its full sequence is Acetyl-coenzyme A synthetase (651 aa).

CoA is bound by residues R189 to K192, T311, and N335. ATP contacts are provided by residues G387 to P389, D411 to T416, D500, and R515. S523 provides a ligand contact to CoA. R526 is an ATP binding site. Mg(2+)-binding residues include V537, H539, and V542. CoA is bound at residue R586. K611 is modified (N6-acetyllysine).

This sequence belongs to the ATP-dependent AMP-binding enzyme family. It depends on Mg(2+) as a cofactor. Post-translationally, acetylated. Deacetylation by the SIR2-homolog deacetylase activates the enzyme.

It carries out the reaction acetate + ATP + CoA = acetyl-CoA + AMP + diphosphate. In terms of biological role, catalyzes the conversion of acetate into acetyl-CoA (AcCoA), an essential intermediate at the junction of anabolic and catabolic pathways. AcsA undergoes a two-step reaction. In the first half reaction, AcsA combines acetate with ATP to form acetyl-adenylate (AcAMP) intermediate. In the second half reaction, it can then transfer the acetyl group from AcAMP to the sulfhydryl group of CoA, forming the product AcCoA. The chain is Acetyl-coenzyme A synthetase from Brucella melitensis biotype 1 (strain ATCC 23456 / CCUG 17765 / NCTC 10094 / 16M).